Here is an 88-residue protein sequence, read N- to C-terminus: KTx type I (88 aa).

The N-terminal stretch at M1–A19 is a signal peptide. The ShKT domain maps to C54–C88. Disulfide bonds link C54–C88, C63–C81, and C72–C85.

This sequence belongs to the sea anemone type 1 potassium channel toxin family. Expressed both outside and in acontia, a specialised envenomation structure laden with batteries of venom-containing nematocysts found only in the superfamily Metridioidea.

The protein localises to the secreted. The protein resides in the nematocyst. Inhibits voltage-gated potassium channels (Kv1/KCNA). The chain is KTx type I from Calliactis polypus (Hermit crab anemone).